Reading from the N-terminus, the 102-residue chain is NADH-quinone oxidoreductase subunit K 2 (102 aa).

3 consecutive transmembrane segments (helical) span residues 5–25 (FEHV…CVLV), 30–50 (LIML…AFVG), and 65–85 (LIIM…VVYL).

This sequence belongs to the complex I subunit 4L family. As to quaternary structure, NDH-1 is composed of 14 different subunits. Subunits NuoA, H, J, K, L, M, N constitute the membrane sector of the complex.

The protein localises to the cell inner membrane. It catalyses the reaction a quinone + NADH + 5 H(+)(in) = a quinol + NAD(+) + 4 H(+)(out). Functionally, NDH-1 shuttles electrons from NADH, via FMN and iron-sulfur (Fe-S) centers, to quinones in the respiratory chain. The immediate electron acceptor for the enzyme in this species is believed to be ubiquinone. Couples the redox reaction to proton translocation (for every two electrons transferred, four hydrogen ions are translocated across the cytoplasmic membrane), and thus conserves the redox energy in a proton gradient. The sequence is that of NADH-quinone oxidoreductase subunit K 2 from Geobacter sulfurreducens (strain ATCC 51573 / DSM 12127 / PCA).